Here is a 434-residue protein sequence, read N- to C-terminus: Hydrogenobyrinate a,c-diamide synthase (434 aa).

The 192-residue stretch at 243-434 folds into the GATase cobBQ-type domain; it reads RIAVARDIAF…MHLIDVAGAA (192 aa). Cys326 acts as the Nucleophile in catalysis.

This sequence belongs to the CobB/CbiA family. As to quaternary structure, homodimer. It depends on Mg(2+) as a cofactor.

The enzyme catalyses hydrogenobyrinate + 2 L-glutamine + 2 ATP + 2 H2O = hydrogenobyrinate a,c-diamide + 2 L-glutamate + 2 ADP + 2 phosphate + 2 H(+). The protein operates within cofactor biosynthesis; adenosylcobalamin biosynthesis; cob(II)yrinate a,c-diamide from precorrin-2 (aerobic route): step 9/10. Functionally, catalyzes the ATP-dependent amidation of the two carboxylate groups at positions a and c of hydrogenobyrinate, using either L-glutamine or ammonia as the nitrogen source. To a much lesser extent, can also use cobyrinate as substrate in vitro, but the physiological substrate is indeed hydrogenobyrinate, as part of the aerobic pathway for cobalamin biosynthesis. This Sinorhizobium sp protein is Hydrogenobyrinate a,c-diamide synthase.